A 268-amino-acid polypeptide reads, in one-letter code: Tryptophan synthase alpha chain (268 aa).

Residues glutamate 49 and aspartate 60 each act as proton acceptor in the active site.

The protein belongs to the TrpA family. Tetramer of two alpha and two beta chains.

The enzyme catalyses (1S,2R)-1-C-(indol-3-yl)glycerol 3-phosphate + L-serine = D-glyceraldehyde 3-phosphate + L-tryptophan + H2O. It participates in amino-acid biosynthesis; L-tryptophan biosynthesis; L-tryptophan from chorismate: step 5/5. The alpha subunit is responsible for the aldol cleavage of indoleglycerol phosphate to indole and glyceraldehyde 3-phosphate. The protein is Tryptophan synthase alpha chain of Shigella boydii serotype 18 (strain CDC 3083-94 / BS512).